We begin with the raw amino-acid sequence, 432 residues long: Calcium uptake protein 2, mitochondrial (432 aa).

A mitochondrion-targeting transit peptide spans 1–22 (MAAAAGRSAWLAAWGGRLRRGL). The EF-hand 1 domain maps to 169–204 (KPHSGFHVAFKMLDVDGNEMIERKEFVKLQKIISKQ). 6 residues coordinate Ca(2+): aspartate 182, aspartate 184, asparagine 186, methionine 188, glutamate 190, and glutamate 193. Serine 202 is modified (phosphoserine). Residues 224–259 (EPGVNTTLQVRFFGKRGEKKLHYKEFRRFMENLQTE) enclose the EF-hand 2; degenerate domain. Residues 290 to 325 (TENKDIYWRNVREKLSVGESISLDEFKSFCHFTTHL) form the EF-hand 3; degenerate domain. The EF-hand 4 domain occupies 359–394 (LSDNLLDTVFKIFDLDGDECLSHGEFLGVLKNRMHR). Ca(2+) is bound by residues aspartate 372, aspartate 374, aspartate 376, cysteine 378, and glutamate 383.

Belongs to the MICU1 family. MICU2 subfamily. As to quaternary structure, heterodimer; disulfide-linked; heterodimerizes with MICU1. Component of the uniplex complex, composed of MCU, EMRE/SMDT1, MICU1 and MICU2 in a 4:4:1:1 stoichiometry. As to expression, predominantly expressed in stomach, intestine, skeletal muscle, kidney, heart, testis, prostate and uterus.

The protein resides in the mitochondrion intermembrane space. The protein localises to the mitochondrion inner membrane. Calcium sensor of the mitochondrial calcium uniporter (MCU) channel, which senses calcium level via its EF-hand domains. MICU1 and MICU2 form a disulfide-linked heterodimer that stimulates and inhibits MCU activity, depending on the concentration of calcium. At low calcium levels, MICU1 occludes the pore of the MCU channel, preventing mitochondrial calcium uptake. At higher calcium levels, calcium-binding to MICU1 and MICU2 induces a conformational change that weakens MCU-MICU1 interactions and moves the MICU1-MICU2 heterodimer away from the pore, allowing calcium permeation through the MCU channel. This is Calcium uptake protein 2, mitochondrial from Mus musculus (Mouse).